The chain runs to 289 residues: ATP synthase subunit a (289 aa).

6 helical membrane passes run alanine 43–phenylalanine 63, isoleucine 104–valine 124, isoleucine 160–leucine 180, isoleucine 193–alanine 213, isoleucine 232–valine 252, and alanine 259–valine 279.

This sequence belongs to the ATPase A chain family. F-type ATPases have 2 components, CF(1) - the catalytic core - and CF(0) - the membrane proton channel. CF(1) has five subunits: alpha(3), beta(3), gamma(1), delta(1), epsilon(1). CF(0) has three main subunits: a(1), b(2) and c(9-12). The alpha and beta chains form an alternating ring which encloses part of the gamma chain. CF(1) is attached to CF(0) by a central stalk formed by the gamma and epsilon chains, while a peripheral stalk is formed by the delta and b chains.

It localises to the cell inner membrane. In terms of biological role, key component of the proton channel; it plays a direct role in the translocation of protons across the membrane. This chain is ATP synthase subunit a, found in Pseudomonas paraeruginosa (strain DSM 24068 / PA7) (Pseudomonas aeruginosa (strain PA7)).